The primary structure comprises 276 residues: Putative pyruvate, phosphate dikinase regulatory protein (276 aa).

Residue 152-159 coordinates ADP; sequence GISRTSKT.

It belongs to the pyruvate, phosphate/water dikinase regulatory protein family. PDRP subfamily.

The catalysed reaction is N(tele)-phospho-L-histidyl/L-threonyl-[pyruvate, phosphate dikinase] + ADP = N(tele)-phospho-L-histidyl/O-phospho-L-threonyl-[pyruvate, phosphate dikinase] + AMP + H(+). It carries out the reaction N(tele)-phospho-L-histidyl/O-phospho-L-threonyl-[pyruvate, phosphate dikinase] + phosphate + H(+) = N(tele)-phospho-L-histidyl/L-threonyl-[pyruvate, phosphate dikinase] + diphosphate. Its function is as follows. Bifunctional serine/threonine kinase and phosphorylase involved in the regulation of the pyruvate, phosphate dikinase (PPDK) by catalyzing its phosphorylation/dephosphorylation. This chain is Putative pyruvate, phosphate dikinase regulatory protein, found in Staphylococcus carnosus (strain TM300).